The following is a 428-amino-acid chain: Trigger factor (428 aa).

Residues 163-248 (GDTAIIDFEG…INDVKVKELS (86 aa)) form the PPIase FKBP-type domain.

The protein belongs to the FKBP-type PPIase family. Tig subfamily.

The protein localises to the cytoplasm. The catalysed reaction is [protein]-peptidylproline (omega=180) = [protein]-peptidylproline (omega=0). Functionally, involved in protein export. Acts as a chaperone by maintaining the newly synthesized protein in an open conformation. Functions as a peptidyl-prolyl cis-trans isomerase. This chain is Trigger factor, found in Clostridioides difficile (strain 630) (Peptoclostridium difficile).